A 365-amino-acid polypeptide reads, in one-letter code: N5-carboxyaminoimidazole ribonucleotide synthase (365 aa).

ATP is bound by residues arginine 93, lysine 132, 137–143, 168–171, glutamate 176, histidine 199, and 249–250; these read GYDGKGQ, EEFV, and NE. Positions 97-279 constitute an ATP-grasp domain; sequence KLFLKKHGFP…QFENLLRAIT (183 aa).

This sequence belongs to the PurK/PurT family. As to quaternary structure, homodimer.

It catalyses the reaction 5-amino-1-(5-phospho-beta-D-ribosyl)imidazole + hydrogencarbonate + ATP = 5-carboxyamino-1-(5-phospho-D-ribosyl)imidazole + ADP + phosphate + 2 H(+). It participates in purine metabolism; IMP biosynthesis via de novo pathway; 5-amino-1-(5-phospho-D-ribosyl)imidazole-4-carboxylate from 5-amino-1-(5-phospho-D-ribosyl)imidazole (N5-CAIR route): step 1/2. Functionally, catalyzes the ATP-dependent conversion of 5-aminoimidazole ribonucleotide (AIR) and HCO(3)(-) to N5-carboxyaminoimidazole ribonucleotide (N5-CAIR). In Aquifex aeolicus (strain VF5), this protein is N5-carboxyaminoimidazole ribonucleotide synthase.